Here is a 294-residue protein sequence, read N- to C-terminus: Small ribosomal subunit protein uS2 (294 aa).

A compositionally biased stretch (basic and acidic residues) spans 256–274; the sequence is SGKFIMDEDPDSKKTKTAE. A disordered region spans residues 256–294; the sequence is SGKFIMDEDPDSKKTKTAEEPSATIEPSTTTTVEVDQNE. Residues 280-294 are compositionally biased toward polar residues; sequence IEPSTTTTVEVDQNE.

The protein belongs to the universal ribosomal protein uS2 family.

The protein is Small ribosomal subunit protein uS2 of Leptospira interrogans serogroup Icterohaemorrhagiae serovar Lai (strain 56601).